The sequence spans 459 residues: UDP-N-acetylmuramate--L-alanine ligase (459 aa).

113-119 (GSHGKTT) contributes to the ATP binding site.

The protein belongs to the MurCDEF family.

The protein localises to the cytoplasm. The catalysed reaction is UDP-N-acetyl-alpha-D-muramate + L-alanine + ATP = UDP-N-acetyl-alpha-D-muramoyl-L-alanine + ADP + phosphate + H(+). It functions in the pathway cell wall biogenesis; peptidoglycan biosynthesis. In terms of biological role, cell wall formation. The polypeptide is UDP-N-acetylmuramate--L-alanine ligase (Persephonella marina (strain DSM 14350 / EX-H1)).